The chain runs to 908 residues: Glutamate receptor ionotropic, kainate 2 (908 aa).

An N-terminal signal peptide occupies residues 1 to 31 (MKIISPVLSNLVFSRSIKVLLCLLWIGYSQG). Over 32–561 (TTHVLRFGGI…VFSFLNPLSP (530 aa)) the chain is Extracellular. Asn-67, Asn-73, Asn-275, Asn-378, Asn-412, Asn-423, and Asn-430 each carry an N-linked (GlcNAc...) asparagine glycan. Cys-96 and Cys-347 are disulfide-bonded. The L-glutamate site is built by Pro-516, Ala-518, and Arg-523. Asn-546 is a glycosylation site (N-linked (GlcNAc...) asparagine). The chain crosses the membrane as a helical span at residues 562 to 582 (DIWMYILLAYLGVSCVLFVIA). Residues 583-638 (RFSPYEWYNPHPCNPDSDVVENNFTLLNSFWFGVGALMQQGSELMPKALSTRIVGG) lie on the Cytoplasmic side of the membrane. A helical transmembrane segment spans residues 639 to 659 (IWWFFTLIIISSYTANLAAFL). Over 660–819 (TVERMESPID…KEASALGVQN (160 aa)) the chain is Extracellular. 3 residues coordinate L-glutamate: Ala-689, Thr-690, and Glu-738. Cys-750 and Cys-804 form a disulfide bridge. A glycan (N-linked (GlcNAc...) asparagine) is linked at Asn-751. A helical membrane pass occupies residues 820 to 840 (IGGIFIVLAAGLVLSVFVAVG). The Cytoplasmic segment spans residues 841–908 (EFLYKSKKNA…RRLPGKETMA (68 aa)). Phosphoserine; by PKC occurs at positions 846 and 868. A Glycyl lysine isopeptide (Lys-Gly) (interchain with G-Cter in SUMO1) cross-link involves residue Lys-886.

This sequence belongs to the glutamate-gated ion channel (TC 1.A.10.1) family. GRIK2 subfamily. As to quaternary structure, homotetramer and heterotetramer with GRIK5. Tetramers may be formed by the dimerization of dimers. Assembles into a kainate-gated homomeric channel that does not bind AMPA. Can form functional heteromeric receptors with GRIK4 and GRIK5. Can form functional heteromeric receptors with GRIK3. Interacts with DLG4. Interacts with NETO2. Interacts (via C-terminus) with KLHL17 (via kelch repeats); the interaction targets GRIK2 for degradation via ubiquitin-proteasome pathway. Post-translationally, sumoylation mediates kainate receptor-mediated endocytosis and regulates synaptic transmission. Sumoylation is enhanced by PIAS3 and desumoylated by SENP1. In terms of processing, ubiquitinated. Ubiquitination regulates the GRIK2 levels at the synapse by leading kainate receptor degradation through proteasome. Phosphorylated by PKC at Ser-868 upon agonist activation, this directly enhance sumoylation. Highest expression is found in the olfactory lobe, piriform cortex, dentate gyrus, hippocampus, granular cell layer of the cerebellum, and in caudate-putamen.

Its subcellular location is the cell membrane. The protein resides in the postsynaptic cell membrane. It carries out the reaction Ca(2+)(in) = Ca(2+)(out). It catalyses the reaction Na(+)(in) = Na(+)(out). Its activity is regulated as follows. Cold receptor activity activated by temperatures between 10-19 degrees Celsius. Functionally, ionotropic glutamate receptor that functions as a cation-permeable ligand-gated ion channel, gated by L-glutamate and the glutamatergic agonist kainic acid. L-glutamate acts as an excitatory neurotransmitter at many synapses in the central nervous system. Binding of the excitatory neurotransmitter L-glutamate induces a conformation change, leading to the opening of the cation channel, and thereby converts the chemical signal to an electrical impulse. The receptor then desensitizes rapidly and enters a transient inactive state, characterized by the presence of bound agonist. Modulates cell surface expression of NETO2. In association with GRIK3, involved in presynaptic facilitation of glutamate release at hippocampal mossy fiber synapses. In terms of biological role, independent of its ionotropic glutamate receptor activity, acts as a thermoreceptor conferring sensitivity to cold temperatures. Functions in dorsal root ganglion neurons. The protein is Glutamate receptor ionotropic, kainate 2 (Grik2) of Rattus norvegicus (Rat).